We begin with the raw amino-acid sequence, 370 residues long: Maturase K (370 aa).

It belongs to the intron maturase 2 family. MatK subfamily.

It localises to the plastid. The protein localises to the chloroplast. Usually encoded in the trnK tRNA gene intron. Probably assists in splicing its own and other chloroplast group II introns. The chain is Maturase K from Marchantia polymorpha (Common liverwort).